A 387-amino-acid chain; its full sequence is Succinyl-diaminopimelate desuccinylase (387 aa).

His-74 is a binding site for Zn(2+). Asp-76 is a catalytic residue. Position 107 (Asp-107) interacts with Zn(2+). Glu-142 functions as the Proton acceptor in the catalytic mechanism. The Zn(2+) site is built by Glu-143, Glu-171, and His-360.

Belongs to the peptidase M20A family. DapE subfamily. Homodimer. Zn(2+) is required as a cofactor. The cofactor is Co(2+).

The catalysed reaction is N-succinyl-(2S,6S)-2,6-diaminopimelate + H2O = (2S,6S)-2,6-diaminopimelate + succinate. Its pathway is amino-acid biosynthesis; L-lysine biosynthesis via DAP pathway; LL-2,6-diaminopimelate from (S)-tetrahydrodipicolinate (succinylase route): step 3/3. Catalyzes the hydrolysis of N-succinyl-L,L-diaminopimelic acid (SDAP), forming succinate and LL-2,6-diaminopimelate (DAP), an intermediate involved in the bacterial biosynthesis of lysine and meso-diaminopimelic acid, an essential component of bacterial cell walls. The polypeptide is Succinyl-diaminopimelate desuccinylase (Rhodopseudomonas palustris (strain TIE-1)).